The sequence spans 206 residues: Probable GTP-binding protein EngB (206 aa).

Positions 23–202 constitute an EngB-type G domain; that stretch reads HTAEVAFVGR…WGALLDTFGK (180 aa). Residues 31 to 38, 58 to 62, 83 to 86, 150 to 153, and 181 to 183 contribute to the GTP site; these read GRSNVGKS, GRTRT, DLPG, TKVD, and FSS. Ser-38 and Thr-60 together coordinate Mg(2+).

This sequence belongs to the TRAFAC class TrmE-Era-EngA-EngB-Septin-like GTPase superfamily. EngB GTPase family. It depends on Mg(2+) as a cofactor.

Its function is as follows. Necessary for normal cell division and for the maintenance of normal septation. The sequence is that of Probable GTP-binding protein EngB from Myxococcus xanthus (strain DK1622).